Here is a 676-residue protein sequence, read N- to C-terminus: RNA helicase NPH-II (676 aa).

In terms of domain architecture, Helicase ATP-binding spans 172–347 (FSAWISHRPV…VFLPNPAFIH (176 aa)). 185-192 (GGTGVGKT) serves as a coordination point for ATP. Residues 296–299 (DEVH) carry the DEXH box motif. The region spanning 366 to 535 (NPSSRMAYIE…NYILYANKFN (170 aa)) is the Helicase C-terminal domain.

The protein belongs to the DEAD box helicase family. DEAH subfamily. In terms of assembly, monomer.

It is found in the virion. The enzyme catalyses ATP + H2O = ADP + phosphate + H(+). Its function is as follows. NTP-dependent helicase that catalyzes unidirectional unwinding of 3'tailed duplex RNAs and plays an important role during transcription of early mRNAs, presumably by preventing R-loop formation behind the elongating RNA polymerase. Might also play a role in the export of newly synthesized mRNA chains out of the core into the cytoplasm. Required for replication and propagation of viral particles. This Vaccinia virus (strain Copenhagen) (VACV) protein is RNA helicase NPH-II (OPG084).